The primary structure comprises 359 residues: Type II restriction enzyme HgiDI (359 aa).

The catalysed reaction is Endonucleolytic cleavage of DNA to give specific double-stranded fragments with terminal 5'-phosphates.. A P subtype restriction enzyme that recognizes the double-stranded sequence 5'-GRCGYC-3' and cleaves after R-2. The chain is Type II restriction enzyme HgiDI from Herpetosiphon aurantiacus (Herpetosiphon giganteus).